The chain runs to 437 residues: Pyrophosphate--fructose 6-phosphate 1-phosphotransferase (437 aa).

Residue Gly-27 participates in diphosphate binding. Asp-122 is a Mg(2+) binding site. Substrate-binding positions include 147–149, 193–195, Glu-261, and 323–326; these read TID, MGR, and YELR. Asp-149 serves as the catalytic Proton acceptor.

This sequence belongs to the phosphofructokinase type A (PFKA) family. PPi-dependent PFK group II subfamily. Clade 'Short' sub-subfamily. Homotetramer. It depends on Mg(2+) as a cofactor. Mn(2+) serves as cofactor.

It localises to the cytoplasm. It carries out the reaction beta-D-fructose 6-phosphate + diphosphate = beta-D-fructose 1,6-bisphosphate + phosphate + H(+). The protein operates within carbohydrate degradation; glycolysis; D-glyceraldehyde 3-phosphate and glycerone phosphate from D-glucose: step 3/4. Its activity is regulated as follows. Activated by AMP. Probably promotes oligomerization of the enzyme. Functionally, catalyzes the phosphorylation of D-fructose 6-phosphate, the first committing step of glycolysis. Uses inorganic phosphate (PPi) as phosphoryl donor instead of ATP like common ATP-dependent phosphofructokinases (ATP-PFKs), which renders the reaction reversible, and can thus function both in glycolysis and gluconeogenesis. Consistently, PPi-PFK can replace the enzymes of both the forward (ATP-PFK) and reverse (fructose-bisphosphatase (FBPase)) reactions. The polypeptide is Pyrophosphate--fructose 6-phosphate 1-phosphotransferase (Naegleria fowleri (Brain eating amoeba)).